Here is a 119-residue protein sequence, read N- to C-terminus: MARVKRAKNSRKNHKKVLKLAKGYYGGKSKLYKTANESVIRALRNSYVGRKNKKRDYRSLWIARINAATRINNLSYSKFMNGIKLAGIDINRKMLSEIAINDPKAFTELVEVAKKQLNA.

It belongs to the bacterial ribosomal protein bL20 family.

Functionally, binds directly to 23S ribosomal RNA and is necessary for the in vitro assembly process of the 50S ribosomal subunit. It is not involved in the protein synthesizing functions of that subunit. The polypeptide is Large ribosomal subunit protein bL20 (Clostridium beijerinckii (strain ATCC 51743 / NCIMB 8052) (Clostridium acetobutylicum)).